A 595-amino-acid polypeptide reads, in one-letter code: Beta-(1--&gt;2)glucan export ATP-binding/permease protein NdvA (595 aa).

An ABC transmembrane type-1 domain is found at 21–301; that stretch reads SLLICSANVM…MSNFINLTIS (281 aa). The next 5 membrane-spanning stretches (helical) occupy residues 22 to 42, 55 to 75, 129 to 149, 152 to 172, and 248 to 268; these read LLIC…PILF, IIPT…AYVL, IWLD…VLIP, FNMN…YVLI, and MAST…VAKG. In terms of domain architecture, ABC transporter spans 335 to 569; that stretch reads IQFHHVTYKF…GGRFYKLLKA (235 aa). 368–375 provides a ligand contact to ATP; it reads GPTGAGKT.

The protein belongs to the ABC transporter superfamily. Beta-(1--&gt;2)glucan exporter (TC 3.A.1.108.1) family. As to quaternary structure, homodimer.

The protein localises to the cell inner membrane. It catalyses the reaction [(1-&gt;2)-beta-D-glucosyl](n)(in) + ATP + H2O = [(1-&gt;2)-beta-D-glucosyl](n)(out) + ADP + phosphate + H(+). Functionally, involved in beta-(1--&gt;2)glucan export. Transmembrane domains (TMD) form a pore in the inner membrane and the ATP-binding domain (NBD) is responsible for energy generation. This Bartonella henselae (strain ATCC 49882 / DSM 28221 / CCUG 30454 / Houston 1) (Rochalimaea henselae) protein is Beta-(1--&gt;2)glucan export ATP-binding/permease protein NdvA.